Reading from the N-terminus, the 399-residue chain is Acetylornithine aminotransferase (399 aa).

Residues 102-103 (GA) and Phe138 each bind pyridoxal 5'-phosphate. Arg141 lines the N(2)-acetyl-L-ornithine pocket. Pyridoxal 5'-phosphate is bound at residue 223–226 (DEVQ). Lys252 carries the post-translational modification N6-(pyridoxal phosphate)lysine. Residue Thr280 participates in pyridoxal 5'-phosphate binding.

This sequence belongs to the class-III pyridoxal-phosphate-dependent aminotransferase family. ArgD subfamily. As to quaternary structure, homodimer. Pyridoxal 5'-phosphate is required as a cofactor.

It is found in the cytoplasm. It catalyses the reaction N(2)-acetyl-L-ornithine + 2-oxoglutarate = N-acetyl-L-glutamate 5-semialdehyde + L-glutamate. It participates in amino-acid biosynthesis; L-arginine biosynthesis; N(2)-acetyl-L-ornithine from L-glutamate: step 4/4. This Ralstonia nicotianae (strain ATCC BAA-1114 / GMI1000) (Ralstonia solanacearum) protein is Acetylornithine aminotransferase.